The sequence spans 304 residues: ATP phosphoribosyltransferase (304 aa).

Belongs to the ATP phosphoribosyltransferase family. Long subfamily. It depends on Mg(2+) as a cofactor.

It is found in the cytoplasm. The enzyme catalyses 1-(5-phospho-beta-D-ribosyl)-ATP + diphosphate = 5-phospho-alpha-D-ribose 1-diphosphate + ATP. It functions in the pathway amino-acid biosynthesis; L-histidine biosynthesis; L-histidine from 5-phospho-alpha-D-ribose 1-diphosphate: step 1/9. Its activity is regulated as follows. Feedback inhibited by histidine. Functionally, catalyzes the condensation of ATP and 5-phosphoribose 1-diphosphate to form N'-(5'-phosphoribosyl)-ATP (PR-ATP). Has a crucial role in the pathway because the rate of histidine biosynthesis seems to be controlled primarily by regulation of HisG enzymatic activity. This is ATP phosphoribosyltransferase from Xanthomonas euvesicatoria pv. vesicatoria (strain 85-10) (Xanthomonas campestris pv. vesicatoria).